Here is a 468-residue protein sequence, read N- to C-terminus: Nicotinamide phosphoribosyltransferase (468 aa).

A diphosphate-binding site is contributed by arginine 180. Beta-nicotinamide D-ribonucleotide is bound at residue aspartate 203. Diphosphate is bound by residues histidine 229 and arginine 293. At histidine 229 the chain carries Phosphohistidine; by autocatalysis. Beta-nicotinamide D-ribonucleotide is bound by residues aspartate 335 and arginine 373.

The protein belongs to the NAPRTase family. As to quaternary structure, homodimer. The dimeric structure consists of two protomers arranged head to tail, with domain A on one protomer interacting with domain B on the other protomer. In terms of processing, phosphorylation at His-229 plays a crucial role in enhancing the substrate affinity and is important for maintaining enzymatic activity.

It carries out the reaction beta-nicotinamide D-ribonucleotide + diphosphate = 5-phospho-alpha-D-ribose 1-diphosphate + nicotinamide + H(+). The protein operates within cofactor biosynthesis; NAD(+) biosynthesis; nicotinamide D-ribonucleotide from 5-phospho-alpha-D-ribose 1-diphosphate and nicotinamide: step 1/1. ATP-dependent autophosphorylation plays a vital role in nicotinamide binding and enzyme activation. Activity is inhibited by FK866. Functionally, catalyzes the condensation of nicotinamide with 5-phosphoribosyl-1-pyrophosphate to yield nicotinamide mononucleotide, an intermediate in the biosynthesis of NAD. Plays an important role in the biosynthesis of NAD via the nicotinamide (NAM) salvage pathway. Is also capable of hydrolyzing ATP and shows ATP-dependent autophosphorylation activity. This Xanthomonas campestris pv. campestris (strain 8004) protein is Nicotinamide phosphoribosyltransferase.